Here is a 239-residue protein sequence, read N- to C-terminus: 2,3,4,5-tetrahydropyridine-2,6-dicarboxylate N-acetyltransferase (239 aa).

This sequence belongs to the transferase hexapeptide repeat family. DapH subfamily.

The catalysed reaction is (S)-2,3,4,5-tetrahydrodipicolinate + acetyl-CoA + H2O = L-2-acetamido-6-oxoheptanedioate + CoA. Its pathway is amino-acid biosynthesis; L-lysine biosynthesis via DAP pathway; LL-2,6-diaminopimelate from (S)-tetrahydrodipicolinate (acetylase route): step 1/3. In terms of biological role, catalyzes the transfer of an acetyl group from acetyl-CoA to tetrahydrodipicolinate. The polypeptide is 2,3,4,5-tetrahydropyridine-2,6-dicarboxylate N-acetyltransferase (Staphylococcus aureus (strain JH9)).